Reading from the N-terminus, the 178-residue chain is Methylmalonyl-CoA epimerase, mitochondrial (178 aa).

The N-terminal 38 residues, 1–38, are a transit peptide targeting the mitochondrion; that stretch reads MRRVVKAAALAAGATGLFSRVQTSVAIGRSFSTPQSQF. Residues 49 to 178 form the VOC domain; the sequence is RLNHVAVAVP…GGVLVELEQA (130 aa). A Co(2+)-binding site is contributed by His52. Lys116 carries the N6-succinyllysine modification. His124 provides a ligand contact to Co(2+). Lys152 is modified (N6-acetyllysine; alternate). Lys152 is modified (N6-succinyllysine; alternate). Glu174 is a Co(2+) binding site.

It belongs to the methylmalonyl-CoA epimerase family.

It localises to the mitochondrion. It carries out the reaction (R)-methylmalonyl-CoA = (S)-methylmalonyl-CoA. In terms of biological role, methylmalonyl-CoA epimerase involved in propionyl-CoA metabolism. The protein is Methylmalonyl-CoA epimerase, mitochondrial of Mus musculus (Mouse).